A 560-amino-acid polypeptide reads, in one-letter code: MSNMDIDSINTGTIDKTPEELTPGTSGATRPIIKPATLAPPSNKRTRNPSPERTTTSSETDIGRKIQKKQTPTEIKKSVYKMVVKLGEFYNQMMVKAGLNDDMERNLIQNAQAVERILLAATDDKKTEYQKKRNARDVKEGKEEIDHNKTGGTFYKMVRDDKTIYFSPIKITFLKEEVKTMYKTTMGSDGFSGLNHIMIGHSQMNDVCFQRSKGLKRVGLDPSLISTFAGSTLPRRSGTTGVAIKGGGTLVDEAIRFIGRAMADRGLLRDIKAKTAYEKILLNLKNKCSAPQQKALVDQVIGSRNPGIADIEDLTLLARSMVVVRPSVASKVVLPISIYAKIPQLGFNTEEYSMVGYEAMALYNMATPVSILRMGDDAKDKSQLFFMSCFGAAYEDLRVLSALTGTEFKPRSALKCKGFHVPAKEQVEGMGAALMSIKLQFWAPMTRSGGNEVSGEGGSGQISCSPVFAVERPIALSKQAVRRMLSMNVEGRDADVKGNLLKMMNDSMAKKTSGNAFIGKKMFQISDKNKVNPIEIPIKQTIPNFFFGRDTAEDYDDLDY.

Residues 1 to 14 show a composition bias toward polar residues; the sequence is MSNMDIDSINTGTI. The tract at residues 1–71 is disordered; sequence MSNMDIDSIN…IGRKIQKKQT (71 aa). The segment covering 48–60 has biased composition (low complexity); it reads NPSPERTTTSSET.

It belongs to the influenza viruses nucleoprotein family. Homomultimerizes to form the nucleocapsid. May bind host exportin-1/XPO1. Binds to viral genomic RNA. Protein-RNA contacts are mediated by a combination of electrostatic interactions between positively charged residues and the phosphate backbone and planar interactions between aromatic side chains and bases. Post-translationally, late in virus-infected cells, may be cleaved from a 56-kDa protein to a 53-kDa protein by a cellular caspase. This cleavage might be a marker for the onset of apoptosis in infected cells or have a specific function in virus host interaction.

It is found in the virion. The protein resides in the host nucleus. Functionally, encapsidates the negative strand viral RNA, protecting it from nucleases. The encapsidated genomic RNA is termed the ribonucleoprotein (RNP) and serves as template for transcription and replication. The RNP needs to be localized in the host nucleus to start an infectious cycle, but is too large to diffuse through the nuclear pore complex. NP comprises at least 2 nuclear localization signals that are responsible for the active RNP import into the nucleus through cellular importin alpha/beta pathway. Later in the infection, nclear export of RNPs are mediated through viral proteins NEP interacting with M1 which binds nucleoproteins. It is possible that nucleoprotein binds directly host exportin-1/XPO1 and plays an active role in RNPs nuclear export. M1 interaction with RNP seems to hide nucleoprotein's nuclear localization signals. Soon after a virion infects a new cell, M1 dissociates from the RNP under acidification of the virion driven by M2 protein. Dissociation of M1 from RNP unmasks nucleoprotein's nuclear localization signals, targeting the RNP to the nucleus. In Homo sapiens (Human), this protein is Nucleoprotein.